The following is a 92-amino-acid chain: Acylphosphatase (92 aa).

The Acylphosphatase-like domain occupies 5–92 (ATAAYVYGVV…TDYKGFTIRY (88 aa)). Residues arginine 20 and asparagine 38 contribute to the active site.

It belongs to the acylphosphatase family.

The catalysed reaction is an acyl phosphate + H2O = a carboxylate + phosphate + H(+). The polypeptide is Acylphosphatase (acyP) (Pectobacterium atrosepticum (strain SCRI 1043 / ATCC BAA-672) (Erwinia carotovora subsp. atroseptica)).